The following is a 942-amino-acid chain: MLLLLGLCLGLSLCVGSQEEAQSWGHSSEQDGLRVPRQVRLLQRLKTKPLMTEFSVKSTIISRYAFTTVSCRMLNRASEDQDIEFQMQIPAAAFITNFTMLIGDKVYQGEITEREKKSGDRVKEKRNKTTEENGEKGTEIFRASAVIPSKDKAAFFLSYEELLQRRLGKYEHSISVRPQQLSGRLSVDVNILESAGIASLEVLPLHNSRQRGSGRGEDDSGPPPSTVINQNETFANIIFKPTVVQQARIAQNGILGDFIIRYDVNREQSIGDIQVLNGYFVHYFAPKDLPPLPKNVVFVLDSSASMVGTKLRQTKDALFTILHDLRPQDRFSIIGFSNRIKVWKDHLISVTPDSIRDGKVYIHHMSPTGGTDINGALQRAIRLLNKYVAHSGIGDRSVSLIVFLTDGKPTVGETHTLKILNNTREAARGQVCIFTIGIGNDVDFRLLEKLSLENCGLTRRVHEEEDAGSQLIGFYDEIRTPLLSDIRIDYPPSSVVQATKTLFPNYFNGSEIIIAGKLVDRKLDHLHVEVTASNSKKFIILKTDVPVRPQKAGKDVTGSPRPGGDGEGDTNHIERLWSYLTTKELLSSWLQSDDEPEKERLRQRAQALAVSYRFLTPFTSMKLRGPVPRMDGLEEAHGMSAAMGPEPVVQSVRGAGTQPGPLLKKPYQPRIKISKTSVDGDPHFVVDFPLSRLTVCFNIDGQPGDILRLVSDHRDSGVTVNGELIGAPAPPNGHKKQRTYLRTITILINKPERSYLEITPSRVILDGGDRLVLPCNQSVVVGSWGLEVSVSANANVTVTIQGSIAFVILIHLYKKPAPFQRHHLGFYIANSEGLSSNCHGLLGQFLNQDARLTEDPAGPSQNLTHPLLLQVGEGPEAVLTVKGHQVPVVWKQRKIYNGEEQIDCWFARNNAAKLIDGEYKDYLAFHPFDTGMTLGQGMSREL.

The first 16 residues, methionine 1–glycine 16, serve as a signal peptide directing secretion. In terms of domain architecture, VIT spans valine 35–glutamate 161. 2 N-linked (GlcNAc...) asparagine glycosylation sites follow: asparagine 97 and asparagine 127. 2 disordered regions span residues lysine 116–lysine 136 and serine 208–valine 227. Residues asparagine 231, asparagine 421, and asparagine 508 are each glycosylated (N-linked (GlcNAc...) asparagine). Residues asparagine 295–isoleucine 478 enclose the VWFA domain. The tract at residues glutamine 550 to asparagine 571 is disordered. 3 N-linked (GlcNAc...) asparagine glycosylation sites follow: asparagine 776, asparagine 795, and asparagine 862.

It belongs to the ITIH family. As to expression, abundantly expressed in placenta. Less abundant expression in mammary gland and ovary. Expression is barely detectable levels in all other tissues tested.

The protein localises to the secreted. Functionally, may act as a tumor suppressor. In Homo sapiens (Human), this protein is Inter-alpha-trypsin inhibitor heavy chain H5 (ITIH5).